The primary structure comprises 407 residues: Odorant receptor 67a (407 aa).

Topologically, residues 1 to 40 are cytoplasmic; it reads MDNVAEMPEEKYVEVDDFLRLAVKFYNTLGIDPYETGRKR. The chain crosses the membrane as a helical span at residues 41-61; sequence TIWFQIYFALNMFNMVFSFYA. The Extracellular portion of the chain corresponds to 62 to 79; that stretch reads EVATLVDRLRDNENFLES. Residues 80 to 100 form a helical membrane-spanning segment; the sequence is CILLSYVSFVVMGLSKIGAVM. At 101–144 the chain is on the cytoplasmic side; the sequence is KKKPKMTALVRQLETCFPSPSAKVQEEYAVKSWLKRCHIYTKGF. The helical transmembrane segment at 145-165 threads the bilayer; sequence GGLFMIMYFAHALIPLFIYFI. Residues 166–208 are Extracellular-facing; sequence QRVLLHYPDAKQIMPFYQLEPWEFRDSWLFYPSYFHQSSAGYT. A helical transmembrane segment spans residues 209 to 229; sequence ATCGSIAGDLMIFAVVLQVIM. The Cytoplasmic portion of the chain corresponds to 230 to 278; it reads HYERLAKVLREFKIQAHNAPNGAKEDIRKLQSLVANHIDILRLTDLMNE. Residues 279-300 form a helical membrane-spanning segment; sequence VFGIPLLLNFIASALLVCLVGV. At 301-314 the chain is on the extracellular side; it reads QLTIALSPEYFCKQ. Residues 315–331 traverse the membrane as a helical segment; the sequence is MLFLISVLLEVYLLCSF. Residues 332–378 lie on the Cytoplasmic side of the membrane; sequence SQRLIDASENVGHAAYDMDWLGSDKRFKKILIFISMRSQKPVCLKAT. A helical transmembrane segment spans residues 379-401; sequence VVLDLSMPTMSIFLGMSYKFFCA. Topologically, residues 402–407 are extracellular; it reads VRTMYQ.

The protein belongs to the insect chemoreceptor superfamily. Heteromeric odorant receptor channel (TC 1.A.69) family. Or49a subfamily. In terms of assembly, interacts with Orco. Complexes exist early in the endomembrane system in olfactory sensory neurons (OSNs), coupling these complexes to the conserved ciliary trafficking pathway. Expressed in olfactory sensory neurons in the antenna.

The protein resides in the cell membrane. Its function is as follows. Odorant receptor which mediates acceptance or avoidance behavior, depending on its substrates. The odorant receptor repertoire encodes a large collection of odor stimuli that vary widely in identity, intensity, and duration. Forms a complex with Orco to form odorant-sensing units, providing sensitive and prolonged odorant signaling and calcium permeability. Involved in the behavioral responses to benzaldehyde and acetophenone. The protein is Odorant receptor 67a (Or67a) of Drosophila melanogaster (Fruit fly).